Reading from the N-terminus, the 233-residue chain is Small ribosomal subunit protein uS3 (233 aa).

In terms of domain architecture, KH type-2 spans 39-107 (IRAFLKRKLY…DVNINIKEER (69 aa)). The segment covering 212–222 (MQPEKTEESAP) has biased composition (basic and acidic residues). The segment at 212-233 (MQPEKTEESAPAKKSRRTRRGK) is disordered. A compositionally biased stretch (basic residues) spans 224–233 (KKSRRTRRGK).

This sequence belongs to the universal ribosomal protein uS3 family. As to quaternary structure, part of the 30S ribosomal subunit. Forms a tight complex with proteins S10 and S14.

Functionally, binds the lower part of the 30S subunit head. Binds mRNA in the 70S ribosome, positioning it for translation. The chain is Small ribosomal subunit protein uS3 from Campylobacter jejuni subsp. doylei (strain ATCC BAA-1458 / RM4099 / 269.97).